A 480-amino-acid chain; its full sequence is NADH-quinone oxidoreductase subunit N (480 aa).

14 consecutive transmembrane segments (helical) span residues 11–31, 38–58, 76–96, 105–125, 128–148, 163–183, 195–215, 240–260, 270–290, 298–318, 329–349, 368–388, 407–427, and 453–473; these read LLPE…GVFA, LVAA…AGLL, FALY…IAAA, APEY…LVSM, LFGV…MVAF, LITG…IYGV, AFGE…ISGL, AAFL…RILL, WTAL…LLAL, MLAY…AALQ, VMIY…TIDL, AAAM…SGFF, VAVA…FGII, and VYAM…LAAL.

This sequence belongs to the complex I subunit 2 family. As to quaternary structure, NDH-1 is composed of 14 different subunits. Subunits NuoA, H, J, K, L, M, N constitute the membrane sector of the complex.

The protein localises to the cell membrane. It carries out the reaction a quinone + NADH + 5 H(+)(in) = a quinol + NAD(+) + 4 H(+)(out). NDH-1 shuttles electrons from NADH, via FMN and iron-sulfur (Fe-S) centers, to quinones in the respiratory chain. The immediate electron acceptor for the enzyme in this species is believed to be a menaquinone. Couples the redox reaction to proton translocation (for every two electrons transferred, four hydrogen ions are translocated across the cytoplasmic membrane), and thus conserves the redox energy in a proton gradient. This Rubrobacter xylanophilus (strain DSM 9941 / JCM 11954 / NBRC 16129 / PRD-1) protein is NADH-quinone oxidoreductase subunit N.